Here is a 174-residue protein sequence, read N- to C-terminus: UPF0316 protein LMOf2365_1801 (174 aa).

Transmembrane regions (helical) follow at residues 4 to 24 (GIFIVATIFIVNILYVTIYTV), 36 to 56 (LAALSSVFEMIIYVVALSLVL), and 62 to 82 (IANVLAYAIGFGVGIIVGMKI).

This sequence belongs to the UPF0316 family.

The protein resides in the cell membrane. In Listeria monocytogenes serotype 4b (strain F2365), this protein is UPF0316 protein LMOf2365_1801.